Consider the following 143-residue polypeptide: Small ribosomal subunit protein bS6 (143 aa).

The interval Asp-97–Ala-143 is disordered. Residues Lys-105–Asp-124 are compositionally biased toward basic and acidic residues.

Belongs to the bacterial ribosomal protein bS6 family.

In terms of biological role, binds together with bS18 to 16S ribosomal RNA. The polypeptide is Small ribosomal subunit protein bS6 (Xanthomonas oryzae pv. oryzae (strain MAFF 311018)).